The primary structure comprises 257 residues: Imidazole glycerol phosphate synthase subunit HisF (257 aa).

Active-site residues include Asp-11 and Asp-130.

It belongs to the HisA/HisF family. In terms of assembly, heterodimer of HisH and HisF.

It localises to the cytoplasm. It carries out the reaction 5-[(5-phospho-1-deoxy-D-ribulos-1-ylimino)methylamino]-1-(5-phospho-beta-D-ribosyl)imidazole-4-carboxamide + L-glutamine = D-erythro-1-(imidazol-4-yl)glycerol 3-phosphate + 5-amino-1-(5-phospho-beta-D-ribosyl)imidazole-4-carboxamide + L-glutamate + H(+). Its pathway is amino-acid biosynthesis; L-histidine biosynthesis; L-histidine from 5-phospho-alpha-D-ribose 1-diphosphate: step 5/9. Its function is as follows. IGPS catalyzes the conversion of PRFAR and glutamine to IGP, AICAR and glutamate. The HisF subunit catalyzes the cyclization activity that produces IGP and AICAR from PRFAR using the ammonia provided by the HisH subunit. This chain is Imidazole glycerol phosphate synthase subunit HisF, found in Mannheimia succiniciproducens (strain KCTC 0769BP / MBEL55E).